Reading from the N-terminus, the 692-residue chain is Hexamerin-1.1 (692 aa).

Residues 1–18 form the signal peptide; sequence MKLLILAVAISLAVLASG. The N-linked (GlcNAc...) asparagine glycan is linked to asparagine 203.

This sequence belongs to the hemocyanin family. In terms of assembly, homohexamer. Larval fat body.

The protein resides in the secreted. Its subcellular location is the extracellular space. Its function is as follows. Larval storage protein (LSP) which may serve as a store of amino acids for synthesis of adult proteins. The polypeptide is Hexamerin-1.1 (HexA) (Anopheles gambiae (African malaria mosquito)).